A 407-amino-acid chain; its full sequence is Uronyl 2-sulfotransferase (407 aa).

The disordered stretch occupies residues 1-20 (MKKKQQQHPGGGTDPWPHGA). The Cytoplasmic portion of the chain corresponds to 1-49 (MKKKQQQHPGGGTDPWPHGAPVGGAPPCLGSCKRRIPLLPFLRFSLRDY). A helical; Signal-anchor for type II membrane protein membrane pass occupies residues 50 to 70 (GFCMATLLVFCLGSLFYQLSG). Residues 71–407 (GPPRFLLDLR…EKWLEDIYKR (337 aa)) are Lumenal-facing. 3 N-linked (GlcNAc...) asparagine glycosylation sites follow: N85, N141, and N156. Residue H169 is part of the active site. N-linked (GlcNAc...) asparagine glycosylation is found at N174 and N320. The segment covering 386–400 (TEEPIDDEEQDDEKW) has biased composition (acidic residues). The segment at 386 to 407 (TEEPIDDEEQDDEKWLEDIYKR) is disordered.

It belongs to the sulfotransferase 3 family.

Its subcellular location is the golgi apparatus membrane. In terms of biological role, sulfotransferase that catalyzes the transfer of sulfate to the position 2 of uronyl residues in glycosaminoglycan chains. Has mainly activity toward iduronyl residues in dermatan sulfate, and weaker activity toward glucuronyl residues of chondroitin sulfate. Has no activity toward desulfated N-resulfated heparin. The sequence is that of Uronyl 2-sulfotransferase from Mus musculus (Mouse).